Reading from the N-terminus, the 483-residue chain is Probable apyrase 3 (483 aa).

Residues 1–29 are Cytoplasmic-facing; the sequence is MTPETDALKVQILPKHQSLPYTVTKAKSK. Residues 30 to 50 traverse the membrane as a helical; Signal-anchor for type II membrane protein segment; that stretch reads SLILLVVVSVTITLGLLLYVF. The Extracellular segment spans residues 51 to 483; the sequence is NSNSVISSGS…NGKSRKYLGF (433 aa). An ATP-binding site is contributed by 72 to 82; the sequence is VLIDAGSSGTR. The active-site Proton acceptor is the Glu-195. 219 to 229 is a binding site for ATP; it reads GIVELGGASAQ. Residues Asn-250, Asn-281, Asn-305, and Asn-326 are each glycosylated (N-linked (GlcNAc...) asparagine).

Belongs to the GDA1/CD39 NTPase family. Requires Ca(2+) as cofactor. In terms of tissue distribution, expressed in the initiation zone of lateral root and in the lateral root tip, the adaxial junction of lateral shoots with the stems, and in the abscission zone of flower organs. Not expressed in the rosette leaves.

The protein localises to the membrane. It catalyses the reaction a ribonucleoside 5'-triphosphate + 2 H2O = a ribonucleoside 5'-phosphate + 2 phosphate + 2 H(+). In terms of biological role, catalyzes the hydrolysis of phosphoanhydride bonds of nucleoside tri- and di-phosphates. The chain is Probable apyrase 3 (APY3) from Arabidopsis thaliana (Mouse-ear cress).